The sequence spans 304 residues: Mitochondrial glycine transporter (304 aa).

3 Solcar repeats span residues 25 to 114 (HPVI…LKQY), 121 to 205 (PTAL…TKNI), and 215 to 299 (LIPI…MMAK). A run of 6 helical transmembrane segments spans residues 31 to 56 (FLCG…TRLQ), 89 to 115 (GMSP…KQYF), 127 to 152 (VMLG…TRYE), 180 to 203 (GLTA…NQTK), 219 to 245 (TNFS…KTHM), and 274 to 292 (GGIP…AWTV).

It belongs to the mitochondrial carrier (TC 2.A.29) family. SLC25A38 subfamily. Preferentially expressed in erythroid cells.

Its subcellular location is the mitochondrion inner membrane. It carries out the reaction glycine(in) = glycine(out). Functionally, mitochondrial glycine transporter that imports glycine into the mitochondrial matrix. Plays an important role in providing glycine for the first enzymatic step in heme biosynthesis, the condensation of glycine with succinyl-CoA to produce 5-aminolevulinate (ALA) in the mitochondrial matrix. Required during erythropoiesis. Plays a role as pro-apoptotic protein that induces caspase-dependent apoptosis. The protein is Mitochondrial glycine transporter of Homo sapiens (Human).